A 459-amino-acid polypeptide reads, in one-letter code: Zinc finger transcription factor lin-29 (459 aa).

The span at 1-14 shows a compositional bias: polar residues; sequence MDQTVLDSAFNSPV. Residues 1-73 form a disordered region; that stretch reads MDQTVLDSAF…GSTGSTPAHH (73 aa). Over residues 16–56 the composition is skewed to low complexity; that stretch reads SGIAGTTTGSGSTTHFGVGTNFKVSVRSSSRSTDGTDSTDG. The span at 57-73 shows a compositional bias: polar residues; the sequence is ANSDNVTGSTGSTPAHH. C2H2-type zinc fingers lie at residues 151 to 173, 180 to 202, 208 to 232, 238 to 260, and 269 to 291; these read YKCT…MRIH, GPCN…IRTH, YKCK…SRCH, FKCN…IPKH, and HICP…MTKH. The tract at residues 390 to 406 is interacts with mab-10; sequence PGFNMITPLENIQRYNG. Over residues 423 to 444 the composition is skewed to low complexity; sequence VSSTPSSTSSSSAGSSSSQGGV. The segment at 423–459 is disordered; that stretch reads VSSTPSSTSSSSAGSSSSQGGVFNPQSLINNMKNHSY. Positions 446 to 459 are enriched in polar residues; it reads NPQSLINNMKNHSY.

As to quaternary structure, interacts (via C-terminus) with transcription cofactor mab-10. Expressed in lateral hypodermal seam cells (at protein level).

It is found in the nucleus. In terms of biological role, transcription factor which regulates the expression of various genes, including those involved in cuticle synthesis and maintenance, such as collagens, and in lipid metabolism. Binds to promoter regions of genes, at 5'-[(T/G)TTTTTT(A/T/C/G)]-3' consensus sequences. Heterochronic protein which controls the choice of stage specific cell fates, including at the juvenile to adult transition. Promotes differentiation, together with transcriptional cofactor mab-10, perhaps as part of a transcriptional complex. Required for vulval morphogenesis and egg laying; perhaps by acting in a subset of the lateral seam cells. Involved in the exit of seam cells from the cell cycle. Required for specification of uterine pi-cell fate, acting upstream of lin-12 Notch signaling, perhaps via maintenance of lag-2 expression in the anchor cell (AC). Involved in morphogenesis of the specialized male tail used in mating. Acts cell non-autonomously from the hypodermis to regulate expression of genes in the intestine, including genes involved in lipid metabolism. May regulate vitellogenesis via the mTORC2 signaling mediated pathway, independently of daf-16. May promote nuclear accumulation of mab-10 in seam cells post-transcriptionally. Dispensable for seam cell fusion. Functionally, required for seam cell fusion. The sequence is that of Zinc finger transcription factor lin-29 from Caenorhabditis elegans.